The following is a 963-amino-acid chain: Bifunctional glutamine synthetase adenylyltransferase/adenylyl-removing enzyme (963 aa).

The interval 1–451 is adenylyl removase; it reads MAAPSELQLY…EHFADIIAER (451 aa). The segment at 461-963 is adenylyl transferase; the sequence is TIEWKALWAG…VAFWEKVFAE (503 aa).

This sequence belongs to the GlnE family. Requires Mg(2+) as cofactor.

The enzyme catalyses [glutamine synthetase]-O(4)-(5'-adenylyl)-L-tyrosine + phosphate = [glutamine synthetase]-L-tyrosine + ADP. It catalyses the reaction [glutamine synthetase]-L-tyrosine + ATP = [glutamine synthetase]-O(4)-(5'-adenylyl)-L-tyrosine + diphosphate. In terms of biological role, involved in the regulation of glutamine synthetase GlnA, a key enzyme in the process to assimilate ammonia. When cellular nitrogen levels are high, the C-terminal adenylyl transferase (AT) inactivates GlnA by covalent transfer of an adenylyl group from ATP to specific tyrosine residue of GlnA, thus reducing its activity. Conversely, when nitrogen levels are low, the N-terminal adenylyl removase (AR) activates GlnA by removing the adenylyl group by phosphorolysis, increasing its activity. The regulatory region of GlnE binds the signal transduction protein PII (GlnB) which indicates the nitrogen status of the cell. This is Bifunctional glutamine synthetase adenylyltransferase/adenylyl-removing enzyme from Hahella chejuensis (strain KCTC 2396).